We begin with the raw amino-acid sequence, 396 residues long: Protein GTS1 (396 aa).

The Arf-GAP domain maps to 14–141 (DRELKELINS…FRYDEIKPED (128 aa)). Residues 30-53 (CGECGNFYPTWCSVNLGVFLCGRC) form a C4-type zinc finger. The span at 148 to 161 (DFDGESDRFDERNR) shows a compositional bias: basic and acidic residues. Disordered regions lie at residues 148 to 194 (DFDG…SGSR) and 233 to 266 (KSSSSRNSVSAAATTSTPPLPRRRATTSGPQPAI). The residue at position 153 (S153) is a Phosphoserine. Y181 is modified (phosphotyrosine). Phosphoserine is present on residues S184 and S187. Residues 193–234 (SRYSRQLAELKDMGFGDTNKNLDALSSAHGNINRAIDYLEKS) enclose the UBA domain. The segment covering 234–249 (SSSSRNSVSAAATTST) has biased composition (low complexity). At S240 the chain carries Phosphoserine. T249 carries the phosphothreonine modification.

It is found in the nucleus. Appears to modulate the timing of budding to obtain an appropriate cell size independent of the DNA replication cycle. Transcription factor involved in both heat resistance and flocculation. The chain is Protein GTS1 (GTS1) from Saccharomyces cerevisiae (strain ATCC 204508 / S288c) (Baker's yeast).